A 618-amino-acid chain; its full sequence is Proline--tRNA ligase (618 aa).

This sequence belongs to the class-II aminoacyl-tRNA synthetase family. ProS type 1 subfamily. Homodimer.

The protein localises to the cytoplasm. It carries out the reaction tRNA(Pro) + L-proline + ATP = L-prolyl-tRNA(Pro) + AMP + diphosphate. Catalyzes the attachment of proline to tRNA(Pro) in a two-step reaction: proline is first activated by ATP to form Pro-AMP and then transferred to the acceptor end of tRNA(Pro). As ProRS can inadvertently accommodate and process non-cognate amino acids such as alanine and cysteine, to avoid such errors it has two additional distinct editing activities against alanine. One activity is designated as 'pretransfer' editing and involves the tRNA(Pro)-independent hydrolysis of activated Ala-AMP. The other activity is designated 'posttransfer' editing and involves deacylation of mischarged Ala-tRNA(Pro). The misacylated Cys-tRNA(Pro) is not edited by ProRS. The sequence is that of Proline--tRNA ligase from Streptococcus pyogenes serotype M18 (strain MGAS8232).